Here is a 44-residue protein sequence, read N- to C-terminus: Photosystem I reaction center subunit IX (44 aa).

A helical membrane pass occupies residues 9–29 (FVRSAPVVAAIWLSLTAGIII).

The protein belongs to the PsaJ family.

It localises to the cellular thylakoid membrane. Its function is as follows. May help in the organization of the PsaE and PsaF subunits. The protein is Photosystem I reaction center subunit IX of Prochlorococcus marinus (strain MIT 9301).